We begin with the raw amino-acid sequence, 194 residues long: MRVKRRKTVSCCTREISQLHGQSLKQINIGVGSLILTKHQGYEFYCKKVTFVFFCFFKISLNSAYLYTLYSDVRTEVAKMERVAWLEVVGKFETEKLTPNSLYEVVFVVKLIDSAKGWDFRVNFKLVLPTGETKERRENVNLLERNKWVEIPAGEFMISPEHLSGKIEFSMLEVKSDQWKSGLIVKGVAIRPKN.

The helical transmembrane segment at 49 to 71 (VTFVFFCFFKISLNSAYLYTLYS) threads the bilayer.

As to expression, vascular tissues, specifically in phloem companion cell-sieve element complexes.

The protein resides in the membrane. The protein is Protein PHLOEM PROTEIN 2-LIKE A2 (PP2A2) of Arabidopsis thaliana (Mouse-ear cress).